Reading from the N-terminus, the 336-residue chain is Dihydroorotate dehydrogenase (quinone) (336 aa).

Residues 62–66 and Thr-86 contribute to the FMN site; that span reads AGLDK. Substrate is bound at residue Lys-66. A substrate-binding site is contributed by 111-115; it reads NRMGF. 2 residues coordinate FMN: Asn-139 and Asn-172. Substrate is bound at residue Asn-172. Ser-175 acts as the Nucleophile in catalysis. Residue Asn-177 participates in substrate binding. Lys-217 and Thr-245 together coordinate FMN. 246-247 contributes to the substrate binding site; the sequence is NT. FMN-binding positions include Gly-268, Gly-297, and 318 to 319; that span reads YS.

The protein belongs to the dihydroorotate dehydrogenase family. Type 2 subfamily. Monomer. FMN is required as a cofactor.

Its subcellular location is the cell membrane. It catalyses the reaction (S)-dihydroorotate + a quinone = orotate + a quinol. It functions in the pathway pyrimidine metabolism; UMP biosynthesis via de novo pathway; orotate from (S)-dihydroorotate (quinone route): step 1/1. Catalyzes the conversion of dihydroorotate to orotate with quinone as electron acceptor. The polypeptide is Dihydroorotate dehydrogenase (quinone) (Klebsiella pneumoniae subsp. pneumoniae (strain ATCC 700721 / MGH 78578)).